The primary structure comprises 274 residues: Large ribosomal subunit protein uL2cz/uL2cy (274 aa).

The tract at residues 224–274 is disordered; the sequence is NPVDHPHGGGEGRAPIGRKKPATPWGYPALGRRSRKRNKYSDNLILRRRSK.

It belongs to the universal ribosomal protein uL2 family. Part of the 50S ribosomal subunit.

The protein localises to the plastid. The protein resides in the chloroplast. The protein is Large ribosomal subunit protein uL2cz/uL2cy (rpl2-A) of Morus indica (Mulberry).